The chain runs to 814 residues: MAAHIAQRLTVQEQEIRRLNEEIGRLLELGLQGSVEHSPNPVLEQLRAENEKLKYRISHLQRSLREEQERARPGQYGEPGLKDAAPVEEPKQQNNKAKEKGQATKGENSVGGKPSACEGNKKNEKKAGKEVDGHKQEGPCAPGFIKDRLALYETLKNEHDALLAARAAHQSKPIKITLADGKQVDGESWKTTPYQVAIGISKGLADNVVIAKVNNELWDLDRPLEQDSNVELLKFDSEEAQAVYWHSSAHILGETMENFYGGCLCYGPPIENGFYYDMYLDGRGVSSNEFPSLENMCKAIIKEKQPFERLEVSKDLLLEMFKYNKFKCRILNEKVDTPTTTVYRCGPLIDLCRGPHVRHTGKIKTLKIYKNSSTYWEGRADMETLQRIYGISFPDSKLMKEWEQFQEEAKNRDHRKIGRDQELFFFHDLSPGSCFFLPRGAHIYNTLTDFIKGEYQIRNFTEVASPNIYNSKLWEMSGHWQHYSENMFSFEVEKETFALKPMNCPGHCLMFGHRPRSWRELPLRFADFGVLHRNELSGTLSGLTRVRRFQQDDAHIFCTMDQIQEEMNGCLQFLQSVYKVFGFTFQLHLSTRPENYLGEIEIWNEAEKQLESSLNQFGEPWKLNPGDGAFYGPKIDIKIKDAIGRYHQCATIQLDFQLPIRFNLTYVSKDGDDKKRPVIIHRAILGSVERMIAILCENYGGKWPFWLSPRQVMVIPVGPSCDEYAQQVCKDVFEAGFMAEVDLDHSCTLNKKIRNAQLAQCNFILVVGEKEKTDSAVNVRTRDNKVHGEILLTSAIEKLKTLKKLRSKNAEEEF.

Positions 2-72 (AAHIAQRLTV…SLREEQERAR (71 aa)) form a coiled coil. The tract at residues 62–142 (RSLREEQERA…GHKQEGPCAP (81 aa)) is disordered. 3 stretches are compositionally biased toward basic and acidic residues: residues 63–72 (SLREEQERAR), 88–102 (EEPKQQNNKAKEKGQ), and 119–137 (GNKKNEKKAGKEVDGHKQE). The TGS domain occupies 172–234 (KPIKITLADG…EQDSNVELLK (63 aa)). Residues 798–804 (KLKTLKK) carry the Nuclear localization signal motif.

The protein belongs to the class-II aminoacyl-tRNA synthetase family.

It is found in the cytoplasm. The protein localises to the nucleus. The catalysed reaction is tRNA(Thr) + L-threonine + ATP = L-threonyl-tRNA(Thr) + AMP + diphosphate + H(+). Catalyzes the attachment of threonine to tRNA(Thr) in a two-step reaction: threonine is first activated by ATP to form Thr-AMP and then transferred to the acceptor end of tRNA(Thr). Also edits incorrectly charged tRNA(Thr) via its editing domain, at the post-transfer stage. The chain is Threonine--tRNA ligase 2, cytoplasmic (tars3) from Xenopus tropicalis (Western clawed frog).